Consider the following 582-residue polypeptide: Actin-histidine N-methyltransferase (582 aa).

Residues Arg-75, 104 to 106 (EGF), Arg-254, 275 to 279 (DMCNH), and 325 to 327 (NGF) each bind S-adenosyl-L-methionine. One can recognise an SET domain in the interval 94-314 (DGFELVEFPE…SGEQIYIFYG (221 aa)). Positions 550-582 (DKDLLPNGTKSENDSFLAEDNQQETGNAKDFCS) are disordered.

The protein belongs to the class V-like SAM-binding methyltransferase superfamily. SETD3 actin-histidine methyltransferase family.

It localises to the cytoplasm. The enzyme catalyses L-histidyl-[protein] + S-adenosyl-L-methionine = N(tele)-methyl-L-histidyl-[protein] + S-adenosyl-L-homocysteine + H(+). Functionally, protein-histidine N-methyltransferase that specifically mediates 3-methylhistidine (tele-methylhistidine) methylation of actin at 'His-73'. Does not have protein-lysine N-methyltransferase activity and probably only catalyzes histidine methylation of actin. The polypeptide is Actin-histidine N-methyltransferase (Xenopus tropicalis (Western clawed frog)).